Here is a 763-residue protein sequence, read N- to C-terminus: ATP-dependent RNA helicase SUPV3L1, mitochondrial (763 aa).

The transit peptide at 1–65 directs the protein to the mitochondrion; sequence MSVNRCIYLL…RPLDTSLFIP (65 aa). Residues 39 to 58 are disordered; sequence RRTFDKLSTRHSSSGSSRPL. Residues 192–332 enclose the Helicase ATP-binding domain; that stretch reads EARAIQRKIV…AVDFITELMF (141 aa). ATP is bound at residue 205 to 212; it reads GPTNSGKT. Positions 354-519 constitute a Helicase C-terminal domain; the sequence is HAVESLDNLK…PTAEQIEMFA (166 aa). 2 disordered regions span residues 679–721 and 742–763; these read DSQP…KSSL and EWAR…RKKK. Over residues 680-697 the composition is skewed to polar residues; sequence SQPTDTESNSSSTVPESE.

Belongs to the helicase family. Mg(2+) serves as cofactor. It depends on Mn(2+) as a cofactor.

The protein localises to the nucleus. It is found in the mitochondrion matrix. The protein resides in the mitochondrion nucleoid. The catalysed reaction is ATP + H2O = ADP + phosphate + H(+). In terms of biological role, major helicase player in mitochondrial RNA metabolism. Component of the mitochondrial degradosome (mtEXO) complex, that degrades 3' overhang double-stranded RNA with a 3'-to-5' directionality in an ATP-dependent manner. ATPase and ATP-dependent multisubstrate helicase, able to unwind double-stranded (ds) DNA and RNA, and RNA/DNA heteroduplexes in the 5'-to-3' direction. Plays a role in the RNA surveillance system in mitochondria; regulates the stability of mature mRNAs, the removal of aberrantly formed mRNAs and the rapid degradation of non coding processing intermediates. Also implicated in recombination and chromatin maintenance pathways. May protect cells from apoptosis. Associates with mitochondrial DNA. The protein is ATP-dependent RNA helicase SUPV3L1, mitochondrial (supv3l1) of Danio rerio (Zebrafish).